Here is a 906-residue protein sequence, read N- to C-terminus: Protein translocase subunit SecA (906 aa).

ATP contacts are provided by residues Q86, 104–108, and D499; that span reads GEGKT. Residues 862 to 885 form a disordered region; it reads KPVVSRIDPKDRNPDDPTSWGRVS. C890, C892, C901, and H902 together coordinate Zn(2+).

This sequence belongs to the SecA family. In terms of assembly, monomer and homodimer. Part of the essential Sec protein translocation apparatus which comprises SecA, SecYEG and auxiliary proteins SecDF-YajC and YidC. The cofactor is Zn(2+).

The protein resides in the cell inner membrane. It is found in the cytoplasm. It carries out the reaction ATP + H2O + cellular proteinSide 1 = ADP + phosphate + cellular proteinSide 2.. Its function is as follows. Part of the Sec protein translocase complex. Interacts with the SecYEG preprotein conducting channel. Has a central role in coupling the hydrolysis of ATP to the transfer of proteins into and across the cell membrane, serving both as a receptor for the preprotein-SecB complex and as an ATP-driven molecular motor driving the stepwise translocation of polypeptide chains across the membrane. This chain is Protein translocase subunit SecA, found in Rickettsia massiliae (strain Mtu5).